Consider the following 251-residue polypeptide: Hydroxyacylglutathione hydrolase (251 aa).

Zn(2+)-binding residues include His-53, His-55, Asp-57, His-58, His-110, Asp-127, and His-165.

Belongs to the metallo-beta-lactamase superfamily. Glyoxalase II family. Monomer. Requires Zn(2+) as cofactor.

It catalyses the reaction an S-(2-hydroxyacyl)glutathione + H2O = a 2-hydroxy carboxylate + glutathione + H(+). The protein operates within secondary metabolite metabolism; methylglyoxal degradation; (R)-lactate from methylglyoxal: step 2/2. Functionally, thiolesterase that catalyzes the hydrolysis of S-D-lactoyl-glutathione to form glutathione and D-lactic acid. In Cronobacter sakazakii (strain ATCC BAA-894) (Enterobacter sakazakii), this protein is Hydroxyacylglutathione hydrolase.